A 195-amino-acid chain; its full sequence is Interferon tau (195 aa).

The N-terminal stretch at 1–23 (MAFVLSLRMALVLVSYCPGGSLG) is a signal peptide. Cystine bridges form between C24-C122 and C52-C162. The N-linked (GlcNAc...) asparagine glycan is linked to N101.

This sequence belongs to the alpha/beta interferon family. IFN-alphaII subfamily. As to expression, constitutively and exclusively expressed in the mononuclear cells of the extraembryonic trophectoderm.

It is found in the secreted. Its function is as follows. Paracrine hormone primarily responsible for maternal recognition of pregnancy. Interacts with endometrial receptors, probably type I interferon receptors, and blocks estrogen receptor expression, preventing the estrogen-induced increase in oxytocin receptor expression in the endometrium. This results in the suppression of the pulsatile endometrial release of the luteolytic hormone prostaglandin F2-alpha, hindering the regression of the corpus luteum (luteolysis) and therefore a return to ovarian cyclicity. This, and a possible direct effect of IFN-tau on prostaglandin synthesis, leads in turn to continued ovarian progesterone secretion, which stimulates the secretion by the endometrium of the nutrients required for the growth of the conceptus. In summary, displays particularly high antiviral and antiproliferative potency concurrently with particular weak cytotoxicity, high antiluteolytic activity and immunomodulatory properties. In contrast with other IFNs, IFN-tau is not virally inducible. This is Interferon tau (IFNT) from Ovibos moschatus (Muskox).